The primary structure comprises 366 residues: Glucose 1-dehydrogenase (366 aa).

Cys39 serves as a coordination point for Zn(2+). Thr41 is a substrate binding site. His66 and Glu67 together coordinate Zn(2+). A substrate-binding site is contributed by Asn89. The Zn(2+) site is built by Cys93, Cys96, Cys99, and Cys107. Substrate contacts are provided by Glu114, Gln150, and Asp154. Gln150 lines the Zn(2+) pocket. NADP(+) contacts are provided by residues 189–192, 211–213, 277–279, 305–307, and Lys354; these read TGPI, NRR, FGF, and LVN. Asn307 contributes to the substrate binding site.

Belongs to the zinc-containing alcohol dehydrogenase family. Glucose 1-dehydrogenase subfamily. Homotetramer. Zn(2+) serves as cofactor.

It carries out the reaction D-glucose + NAD(+) = D-glucono-1,5-lactone + NADH + H(+). The enzyme catalyses D-glucose + NADP(+) = D-glucono-1,5-lactone + NADPH + H(+). It catalyses the reaction D-galactose + NAD(+) = D-galactono-1,4-lactone + NADH + H(+). The catalysed reaction is D-galactose + NADP(+) = D-galactono-1,5-lactone + NADPH + H(+). It carries out the reaction an aldopyranose + NAD(+) = aldono-1,5-lactone + NADH + H(+). The enzyme catalyses an aldopyranose + NADP(+) = aldono-1,5-lactone + NADPH + H(+). With respect to regulation, inhibited by EDTA in vitro. Functionally, catalyzes the NAD(P)(+)-dependent oxidation of D-glucose to D-gluconate via gluconolactone. Displays broad substrate specificity since it is able to catalyze the oxidation of a number of alternative aldose sugars, such as D-galactose, D-xylose and L-arabinose, to the corresponding glyconate. Can utilize both NAD(+) and NADP(+) as electron acceptor. Physiologically, seems to be involved in the degradation of both glucose and galactose through a non-phosphorylative variant of the Entner-Doudoroff pathway. The sequence is that of Glucose 1-dehydrogenase from Saccharolobus solfataricus (Sulfolobus solfataricus).